Consider the following 147-residue polypeptide: MARQVFDDKLLAVISGNSIGVLATIKHDGRPQLSNVQYHFDPRKLLIQVSIAEPRAKTRNLRRDPRASILVDADDGWSYAVAEGTAQLTPPAAAPDDDTVEALIALYRNIAGEHSDWDDYRQAMVTDRRVLLTLPISHVYGLPPGMR.

Residues Q32, Q37, S50, 56–60 (AKTRN), 77–79 (WSY), and H138 contribute to the coenzyme F420-(gamma-Glu)n site.

This sequence belongs to the F420H(2)-dependent biliverdin reductase family. Homodimer.

Functionally, F420H(2)-dependent reductase able to catalyze the reduction of biliverdin-IXalpha to bilirubin-IXalpha in vitro. However, kinetic parameters show that it is less efficient than the biliverdin reductase Rv2074 and suggest biliverdin-IXalpha is unlikely to be the native substrate of Rv1155, which probably catalyzes the reduction of an alternative molecule in vivo. Binds coenzyme F420, but does not bind FMN or other flavins. Cannot use pyridoxine 5'-phosphate, pyridoxamine 5'-phosphate, pyridoxal 5'-phosphate (PLP), the anti-tuberculosis drug PA-824 or aflatoxin analogs as substrates. The sequence is that of F420H(2)-dependent reductase Rv1155 from Mycobacterium tuberculosis (strain ATCC 25618 / H37Rv).